Here is a 765-residue protein sequence, read N- to C-terminus: Periplasmic beta-glucosidase (765 aa).

Positions 1 to 20 (MKWLCSVGVAVSLAMQPALA) are cleaved as a signal peptide. Aspartate 287 is a catalytic residue.

Belongs to the glycosyl hydrolase 3 family.

The protein localises to the periplasm. It carries out the reaction Hydrolysis of terminal, non-reducing beta-D-glucosyl residues with release of beta-D-glucose.. The sequence is that of Periplasmic beta-glucosidase (bglX) from Salmonella typhimurium (strain LT2 / SGSC1412 / ATCC 700720).